The sequence spans 357 residues: (+)-eremophilene synthase (357 aa).

Residues D100 and E105 each coordinate Mg(2+). The short motif at D100 to E105 is the DDXXE motif element. R198 lines the substrate pocket. Residues N244 and S248 each coordinate Mg(2+). Position 251 (K251) interacts with substrate. A Mg(2+)-binding site is contributed by D252. R331 to Y332 provides a ligand contact to substrate.

This sequence belongs to the terpene synthase family. Mg(2+) is required as a cofactor.

The catalysed reaction is (2E,6E)-farnesyl diphosphate = (+)-eremophilene + diphosphate. Its pathway is secondary metabolite biosynthesis; terpenoid biosynthesis. Functionally, catalyzes the conversion of (2E,6E)-farnesyl diphosphate (FPP) to yield the bicyclic sesquiterpene eremophilene via a 1,10-cyclization, which requires the abstraction of the pyrophosphate from FPP to yield the (E,E)-germacradienyl cation. The only accepted substrate is farnesyl diphosphate (FPP). This chain is (+)-eremophilene synthase, found in Gibberella fujikuroi (strain CBS 195.34 / IMI 58289 / NRRL A-6831) (Bakanae and foot rot disease fungus).